The sequence spans 288 residues: ATP synthase gamma chain (288 aa).

Belongs to the ATPase gamma chain family. F-type ATPases have 2 components, CF(1) - the catalytic core - and CF(0) - the membrane proton channel. CF(1) has five subunits: alpha(3), beta(3), gamma(1), delta(1), epsilon(1). CF(0) has three main subunits: a, b and c.

Its subcellular location is the cell membrane. Produces ATP from ADP in the presence of a proton gradient across the membrane. The gamma chain is believed to be important in regulating ATPase activity and the flow of protons through the CF(0) complex. The sequence is that of ATP synthase gamma chain from Staphylococcus aureus (strain Mu3 / ATCC 700698).